The sequence spans 416 residues: Coenzyme F420H(2) oxidase (416 aa).

Residues histidine 87, glutamate 89, aspartate 91, histidine 92, histidine 155, aspartate 174, and histidine 239 each coordinate Fe cation. In terms of domain architecture, Flavodoxin-like spans 266–407 (AVIVYDTMHY…NCYNMGKELA (142 aa)). Residues 272–277 (TMHYST), 324–327 (TIYD), and 359–364 (SMGGEG) each bind FMN.

It in the N-terminal section; belongs to the zinc metallo-hydrolase group 3 family. It depends on FMN as a cofactor. Requires Fe cation as cofactor.

The enzyme catalyses 2 reduced coenzyme F420-(gamma-L-Glu)(n) + O2 = 2 oxidized coenzyme F420-(gamma-L-Glu)(n) + 2 H2O + 2 H(+). Catalyzes the oxidation of F420H(2) with O(2). May be involved in O(2) detoxification, reducing the intracellular O(2) concentration to a level allowing growth at the expense of methane formation. This chain is Coenzyme F420H(2) oxidase (fprA), found in Methanocaldococcus jannaschii (strain ATCC 43067 / DSM 2661 / JAL-1 / JCM 10045 / NBRC 100440) (Methanococcus jannaschii).